Reading from the N-terminus, the 142-residue chain is NADH-quinone oxidoreductase subunit A 2 (142 aa).

3 consecutive transmembrane segments (helical) span residues 18–38, 73–93, and 104–124; these read FLPL…LLLA, FYLI…IFAW, and GLVH…WLWL.

This sequence belongs to the complex I subunit 3 family. NDH-1 is composed of 14 different subunits. Subunits NuoA, H, J, K, L, M, N constitute the membrane sector of the complex.

Its subcellular location is the cell inner membrane. The enzyme catalyses a quinone + NADH + 5 H(+)(in) = a quinol + NAD(+) + 4 H(+)(out). Its function is as follows. NDH-1 shuttles electrons from NADH, via FMN and iron-sulfur (Fe-S) centers, to quinones in the respiratory chain. The immediate electron acceptor for the enzyme in this species is believed to be ubiquinone. Couples the redox reaction to proton translocation (for every two electrons transferred, four hydrogen ions are translocated across the cytoplasmic membrane), and thus conserves the redox energy in a proton gradient. This chain is NADH-quinone oxidoreductase subunit A 2, found in Geobacter sulfurreducens (strain ATCC 51573 / DSM 12127 / PCA).